The chain runs to 251 residues: 5'-nucleotidase SurE (251 aa).

A divalent metal cation contacts are provided by D8, D9, S40, and N95.

The protein belongs to the SurE nucleotidase family. A divalent metal cation serves as cofactor.

The protein resides in the cytoplasm. It catalyses the reaction a ribonucleoside 5'-phosphate + H2O = a ribonucleoside + phosphate. Functionally, nucleotidase that shows phosphatase activity on nucleoside 5'-monophosphates. The sequence is that of 5'-nucleotidase SurE from Lawsonia intracellularis (strain PHE/MN1-00).